We begin with the raw amino-acid sequence, 144 residues long: uncharacterized protein (144 aa).

The first 23 residues, 1–23 (MVIPLRNKYGILFLIAVCIMVSG), serve as a signal peptide directing secretion. A disordered region spans residues 119 to 144 (QNGQRKTMTRIESKTGREEKDEKSKS). A compositionally biased stretch (basic and acidic residues) spans 127-144 (TRIESKTGREEKDEKSKS).

This is an uncharacterized protein from Bacillus subtilis (strain 168).